Consider the following 156-residue polypeptide: Small ribosomal subunit protein uS7 (156 aa).

Belongs to the universal ribosomal protein uS7 family. As to quaternary structure, part of the 30S ribosomal subunit. Contacts proteins S9 and S11.

One of the primary rRNA binding proteins, it binds directly to 16S rRNA where it nucleates assembly of the head domain of the 30S subunit. Is located at the subunit interface close to the decoding center, probably blocks exit of the E-site tRNA. In Bacillus cereus (strain B4264), this protein is Small ribosomal subunit protein uS7.